The following is a 745-amino-acid chain: Immunoglobulin superfamily containing leucine-rich repeat protein 2 (745 aa).

A signal peptide spans 1–18 (MFPLRALWLVWALLGVAG). Residues 19–51 (SCPEPCACVDKYAHQFADCAYKELREVPEGLPA) enclose the LRRNT domain. The Extracellular segment spans residues 19 to 589 (SCPEPCACVD…VFSTKKELPS (571 aa)). Asparagine 52 carries an N-linked (GlcNAc...) asparagine glycan. LRR repeat units lie at residues 52–73 (NVTT…AFAD), 76–97 (QVTS…ALAV), 100–123 (QLKN…RNLS), 124–145 (ALQL…ALGA), and 148–169 (DLRS…TFDA). N-linked (GlcNAc...) asparagine glycosylation occurs at asparagine 121. The LRRCT domain occupies 181–232 (NPFHCGCGLVWLQAWAASTRVSLPEPDSIACASPPALQGVPVYRLPALPCAP). Residues 233–371 (PSVHLSAEPP…GANSTSIRVA (139 aa)) form the Ig-like domain. Residues cysteine 260 and cysteine 355 are joined by a disulfide bond. The tract at residues 287-326 (VLSGEDDGVGAEEGEGEGDGDLLTQTQAQTPTPAPAWPAP) is disordered. A compositionally biased stretch (acidic residues) spans 290-306 (GEDDGVGAEEGEGEGDG). N-linked (GlcNAc...) asparagine glycosylation is found at asparagine 337 and asparagine 364. The segment at 375–466 (TGPPKHAPGA…QRCGNGDPSR (92 aa)) is disordered. The segment covering 431–449 (TETEPEEDTSEGEEAEDQI) has biased composition (acidic residues). 2 N-linked (GlcNAc...) asparagine glycosylation sites follow: asparagine 474 and asparagine 563. A helical membrane pass occupies residues 590–610 (LLVIVAVSVFLLVLATVPLLG). The Cytoplasmic portion of the chain corresponds to 611 to 745 (AACCHLLAKH…INGNYRQTAG (135 aa)). The disordered stretch occupies residues 656-722 (KSYPAGGEAG…FEAGSEYSDR (67 aa)). Residues 665 to 683 (GGEEPEDVQGEGLDEDAEQ) show a composition bias toward acidic residues. Phosphotyrosine is present on tyrosine 719. Serine 720 carries the phosphoserine modification.

Homomultimer. Interacts with NTRK1/TrkA.

It localises to the cell membrane. Functionally, required for axon extension during neural development. In Homo sapiens (Human), this protein is Immunoglobulin superfamily containing leucine-rich repeat protein 2 (ISLR2).